The primary structure comprises 270 residues: Elongation factor Ts (270 aa).

The tract at residues 77-80 is involved in Mg(2+) ion dislocation from EF-Tu; sequence TDFV.

Belongs to the EF-Ts family.

The protein localises to the cytoplasm. In terms of biological role, associates with the EF-Tu.GDP complex and induces the exchange of GDP to GTP. It remains bound to the aminoacyl-tRNA.EF-Tu.GTP complex up to the GTP hydrolysis stage on the ribosome. This Nocardioides sp. (strain ATCC BAA-499 / JS614) protein is Elongation factor Ts.